A 191-amino-acid polypeptide reads, in one-letter code: MKIGVLALQGAVAEHLRMLEEVGATAVPVKRVEELDDLDGLVIPGGESTTISKLMHKYGFMEAVQEFGKANKPIFGTCAGAILLAKRIQGQDDYHLGLMDIKVERNAFGRQKESFEVLMPVADVGADYPAVFIRAPYIMEVGENGQVLAKHEDKIVVARSGHYLAAAFHPELTEDTRLHKYFLDMVKEYRS.

Position 46-48 (46-48) interacts with L-glutamine; it reads GES. Residue Cys-78 is the Nucleophile of the active site. L-glutamine is bound by residues Arg-105 and 133–134; that span reads IR. Active-site charge relay system residues include His-169 and Glu-171.

It belongs to the glutaminase PdxT/SNO family. As to quaternary structure, in the presence of PdxS, forms a dodecamer of heterodimers. Only shows activity in the heterodimer.

It catalyses the reaction aldehydo-D-ribose 5-phosphate + D-glyceraldehyde 3-phosphate + L-glutamine = pyridoxal 5'-phosphate + L-glutamate + phosphate + 3 H2O + H(+). The catalysed reaction is L-glutamine + H2O = L-glutamate + NH4(+). It participates in cofactor biosynthesis; pyridoxal 5'-phosphate biosynthesis. Catalyzes the hydrolysis of glutamine to glutamate and ammonia as part of the biosynthesis of pyridoxal 5'-phosphate. The resulting ammonia molecule is channeled to the active site of PdxS. The sequence is that of Pyridoxal 5'-phosphate synthase subunit PdxT from Brevibacillus brevis (strain 47 / JCM 6285 / NBRC 100599).